Here is a 906-residue protein sequence, read N- to C-terminus: Rho GTPase-activating protein gacJ (906 aa).

Residues 53 to 117 (LEGHLNPSSH…RDNSRSDNIR (65 aa)) are disordered. Positions 69-79 (NNNNNNNNNNN) are enriched in low complexity. Over residues 92–117 (SRSDSKHHNRENSKSDRDNSRSDNIR) the composition is skewed to basic and acidic residues. The 188-residue stretch at 161-348 (EELQSLYPDQ…YMLEYFNDIF (188 aa)) folds into the Rho-GAP domain. Disordered regions lie at residues 368–415 (DTTS…SRSK), 452–864 (EIIP…SVLT), and 877–906 (ANQA…NINK). Polar residues predominate over residues 381–404 (NGGSPRTSNTPYQQQHQLSSQSMA). Over residues 461 to 487 (TTTTTTTTTNTTTTTTTTNTTPNNTTT) the composition is skewed to low complexity. Pro residues-rich tracts occupy residues 494 to 510 (PVPP…PPNP) and 547 to 560 (QPPP…PSPP). Positions 565–574 (KPTSKSDFIP) are enriched in polar residues. Low complexity-rich tracts occupy residues 575-597 (STNN…SIPK) and 613-629 (IEEP…TTTT). The segment covering 637 to 649 (FKNNGTISSGSKS) has biased composition (polar residues). Low complexity-rich tracts occupy residues 650-663 (NPNL…NQPL) and 683-694 (SKPITTTPTIKK). Residues 708-721 (PPSPSSSSPSPPHN) show a composition bias toward pro residues. Low complexity-rich tracts occupy residues 754–772 (PTIP…PTTP), 785–816 (PPIN…STPK), and 844–861 (SSPT…SSPS). The span at 880-890 (AKKNPLSNSGG) shows a compositional bias: polar residues.

It is found in the cytoplasm. Its function is as follows. Rho GTPase-activating protein involved in the signal transduction pathway. The protein is Rho GTPase-activating protein gacJ (gacJ) of Dictyostelium discoideum (Social amoeba).